The sequence spans 262 residues: Electron transfer flavoprotein beta subunit lysine methyltransferase (262 aa).

A mitochondrion-targeting transit peptide spans 1–38; the sequence is MALSLGWKAHRNHCGLLLQALRSSGLLLFPCGQCPWRG.

This sequence belongs to the methyltransferase superfamily. ETFBKMT family. As to quaternary structure, interacts with HSPD1; this protein may possibly be a methylation substrate.

Its subcellular location is the cytoplasm. The protein resides in the mitochondrion matrix. The catalysed reaction is L-lysyl-[protein] + 3 S-adenosyl-L-methionine = N(6),N(6),N(6)-trimethyl-L-lysyl-[protein] + 3 S-adenosyl-L-homocysteine + 3 H(+). In terms of biological role, protein-lysine methyltransferase that selectively trimethylates the flavoprotein ETFB in mitochondria. Thereby, may negatively regulate the function of ETFB in electron transfer from Acyl-CoA dehydrogenases to the main respiratory chain. This chain is Electron transfer flavoprotein beta subunit lysine methyltransferase, found in Homo sapiens (Human).